We begin with the raw amino-acid sequence, 339 residues long: RNA 3'-terminal phosphate cyclase (339 aa).

ATP is bound by residues glutamine 103 and 283 to 287 (HLADQ). Residue histidine 308 is the Tele-AMP-histidine intermediate of the active site.

This sequence belongs to the RNA 3'-terminal cyclase family. Type 1 subfamily.

It is found in the cytoplasm. The enzyme catalyses a 3'-end 3'-phospho-ribonucleotide-RNA + ATP = a 3'-end 2',3'-cyclophospho-ribonucleotide-RNA + AMP + diphosphate. Catalyzes the conversion of 3'-phosphate to a 2',3'-cyclic phosphodiester at the end of RNA. The mechanism of action of the enzyme occurs in 3 steps: (A) adenylation of the enzyme by ATP; (B) transfer of adenylate to an RNA-N3'P to produce RNA-N3'PP5'A; (C) and attack of the adjacent 2'-hydroxyl on the 3'-phosphorus in the diester linkage to produce the cyclic end product. The biological role of this enzyme is unknown but it is likely to function in some aspects of cellular RNA processing. This chain is RNA 3'-terminal phosphate cyclase, found in Salmonella typhimurium (strain LT2 / SGSC1412 / ATCC 700720).